Here is a 215-residue protein sequence, read N- to C-terminus: tRNA (guanine-N(7)-)-methyltransferase (215 aa).

The S-adenosyl-L-methionine site is built by D43, E68, N95, and D121. D121 is a catalytic residue. The substrate site is built by K125 and D157.

The protein belongs to the class I-like SAM-binding methyltransferase superfamily. TrmB family.

The enzyme catalyses guanosine(46) in tRNA + S-adenosyl-L-methionine = N(7)-methylguanosine(46) in tRNA + S-adenosyl-L-homocysteine. It participates in tRNA modification; N(7)-methylguanine-tRNA biosynthesis. Functionally, catalyzes the formation of N(7)-methylguanine at position 46 (m7G46) in tRNA. The polypeptide is tRNA (guanine-N(7)-)-methyltransferase (Trichormus variabilis (strain ATCC 29413 / PCC 7937) (Anabaena variabilis)).